The chain runs to 1037 residues: Mediator of RNA polymerase II transcription subunit 14 (1037 aa).

The protein belongs to the Mediator complex subunit 14 family. As to quaternary structure, component of the Mediator complex.

It localises to the nucleus. Component of the Mediator complex, a coactivator involved in the regulated transcription of nearly all RNA polymerase II-dependent genes. Mediator functions as a bridge to convey information from gene-specific regulatory proteins to the basal RNA polymerase II transcription machinery. Mediator is recruited to promoters by direct interactions with regulatory proteins and serves as a scaffold for the assembly of a functional preinitiation complex with RNA polymerase II and the general transcription factors. The sequence is that of Mediator of RNA polymerase II transcription subunit 14 (RGR1) from Candida glabrata (strain ATCC 2001 / BCRC 20586 / JCM 3761 / NBRC 0622 / NRRL Y-65 / CBS 138) (Yeast).